The chain runs to 199 residues: Holliday junction branch migration complex subunit RuvA (199 aa).

Positions 1–64 (MIALLTGRLA…EDSISLFGFR (64 aa)) are domain I. Residues 65–143 (TLAEKEFFQL…KMDVAPSAQE (79 aa)) form a domain II region. Positions 144-154 (APSSEAPAEVA) are flexible linker. Residues 154–199 (ADDVASALVNLGYKEAVVRKVLAEMSIEPDASTEAVLRQALKVLMK) are domain III.

This sequence belongs to the RuvA family. As to quaternary structure, homotetramer. Forms an RuvA(8)-RuvB(12)-Holliday junction (HJ) complex. HJ DNA is sandwiched between 2 RuvA tetramers; dsDNA enters through RuvA and exits via RuvB. An RuvB hexamer assembles on each DNA strand where it exits the tetramer. Each RuvB hexamer is contacted by two RuvA subunits (via domain III) on 2 adjacent RuvB subunits; this complex drives branch migration. In the full resolvosome a probable DNA-RuvA(4)-RuvB(12)-RuvC(2) complex forms which resolves the HJ.

The protein localises to the cytoplasm. Functionally, the RuvA-RuvB-RuvC complex processes Holliday junction (HJ) DNA during genetic recombination and DNA repair, while the RuvA-RuvB complex plays an important role in the rescue of blocked DNA replication forks via replication fork reversal (RFR). RuvA specifically binds to HJ cruciform DNA, conferring on it an open structure. The RuvB hexamer acts as an ATP-dependent pump, pulling dsDNA into and through the RuvAB complex. HJ branch migration allows RuvC to scan DNA until it finds its consensus sequence, where it cleaves and resolves the cruciform DNA. In Geobacter sulfurreducens (strain ATCC 51573 / DSM 12127 / PCA), this protein is Holliday junction branch migration complex subunit RuvA.